Reading from the N-terminus, the 136-residue chain is Large ribosomal subunit protein uL16c (136 aa).

The protein belongs to the universal ribosomal protein uL16 family. As to quaternary structure, part of the 50S ribosomal subunit.

It localises to the plastid. It is found in the chloroplast. This Chlamydomonas sp. (strain WXM) protein is Large ribosomal subunit protein uL16c.